The chain runs to 521 residues: Ribonuclease Y (521 aa).

A helical transmembrane segment spans residues 5–25 (LLLILTAVIMLIVGFAVGAIL). The disordered stretch occupies residues 77–107 (ELKDRRGEVQKQENRLIQREETMDRKDATLD). The region spanning 211–271 (TVTVVTLPND…IRREIARMTL (61 aa)) is the KH domain. In terms of domain architecture, HD spans 337–430 (VLNHSIEVAK…VAASDAISAA (94 aa)).

The protein belongs to the RNase Y family.

The protein resides in the cell membrane. In terms of biological role, endoribonuclease that initiates mRNA decay. The chain is Ribonuclease Y from Latilactobacillus sakei subsp. sakei (strain 23K) (Lactobacillus sakei subsp. sakei).